A 450-amino-acid polypeptide reads, in one-letter code: BAG family molecular chaperone regulator 5 (450 aa).

5 BAG domains span residues 9 to 86 (SIKR…EQNA), 95 to 167 (EAIF…ESCA), 182 to 260 (SVSK…DLDE), 275 to 350 (SILK…DLKE), and 365 to 442 (EHQS…YYLD).

As to quaternary structure, binds to the ATPase domain of HSP/HSC70 chaperones.

Functionally, co-chaperone for HSP/HSP70 proteins. It functions as a nucleotide-exchange factor promoting the release of ADP from HSP70, thereby activating HSP70-mediated protein refolding. The protein is BAG family molecular chaperone regulator 5 (BAG5) of Gallus gallus (Chicken).